Reading from the N-terminus, the 395-residue chain is Putative 8-amino-7-oxononanoate synthase (395 aa).

R23 is a binding site for substrate. 110–111 (GY) contacts pyridoxal 5'-phosphate. H135 is a substrate binding site. Pyridoxal 5'-phosphate-binding positions include S182, 207–210 (DEAH), and 239–242 (TFSK). K242 is subject to N6-(pyridoxal phosphate)lysine. T356 contacts substrate.

Belongs to the class-II pyridoxal-phosphate-dependent aminotransferase family. BioF subfamily. As to quaternary structure, homodimer. Pyridoxal 5'-phosphate is required as a cofactor.

The catalysed reaction is 6-carboxyhexanoyl-[ACP] + L-alanine + H(+) = (8S)-8-amino-7-oxononanoate + holo-[ACP] + CO2. It functions in the pathway cofactor biosynthesis; biotin biosynthesis. Catalyzes the decarboxylative condensation of pimeloyl-[acyl-carrier protein] and L-alanine to produce 8-amino-7-oxononanoate (AON), [acyl-carrier protein], and carbon dioxide. The chain is Putative 8-amino-7-oxononanoate synthase (bioF) from Bacillus cereus (strain B4264).